We begin with the raw amino-acid sequence, 498 residues long: METLLKPLTSLLLSSPTPHRSIFQQNPPSLNPTTKKKSRKCHFRNESSKLFCSFLDLAPISKPESFDVNISLVDPNSGRAQFDVIIIGAGPAGLRLAEHVSKYGIKVCCVDPSPLSMWPNNYGVWVDEFENLGLEDCLDHKWPMTCVHINDHKTKYLGRPYGRVSRKKLKLRLLNSCVENRVKFYKAKVWKVEHEEFESSIVCDDGKKIRGSLVVDASGFASDFIEYDKPRNHGYQIAHGVLVEVDNHPFDLDKMVLMDWRDSHLGNEPYLRVNNAKEPTFLYAMPFDRNLVFLEETSLVSRPVLSYMEVKRRMVARLRHLGIKVRSVIEEEKCVIPMGGPLPRIPQNVMAIGGNSGIVHPSTGYMVARSMALAPVLAEAIVKGLGSTRMIRGSQLYHRVWNGLWPLDRRCIGECYSFGMETLLKLDLKGTRRLFDAFFDLDPKYWQGFLSSRLSVKELAILSLCLFGHGSNLTRLDIVTKCPVPLVRLIGNLAIESL.

The transit peptide at 1–33 directs the protein to the chloroplast; the sequence is METLLKPLTSLLLSSPTPHRSIFQQNPPSLNPT. A disordered region spans residues 16 to 38; the sequence is PTPHRSIFQQNPPSLNPTTKKKS. Polar residues predominate over residues 22–33; the sequence is IFQQNPPSLNPT. 84–112 is a binding site for NAD(+); the sequence is VIIIGAGPAGLRLAEHVSKYGIKVCCVDP.

This sequence belongs to the lycopene cyclase family.

The protein resides in the plastid. It localises to the chloroplast. The catalysed reaction is all-trans-violaxanthin = all-trans-neoxanthin. It functions in the pathway carotenoid biosynthesis; neoxanthin biosynthesis. Functionally, involved in the synthesis of neoxanthin, the last product of carotenoid synthesis and a precursor of abscisic acid. The protein is Neoxanthin synthase, chloroplastic (NXS) of Solanum tuberosum (Potato).